The primary structure comprises 226 residues: Glutathione peroxidase 3 (226 aa).

An N-terminal signal peptide occupies residues 1 to 24; it reads MARILRASCLLSLLLAGFVPPGRG. Residue selenocysteine 73 is part of the active site. Position 73 (selenocysteine 73) is a non-standard amino acid, selenocysteine.

This sequence belongs to the glutathione peroxidase family. As to quaternary structure, homotetramer. As to expression, secreted in plasma.

The protein localises to the secreted. It carries out the reaction 2 glutathione + H2O2 = glutathione disulfide + 2 H2O. The catalysed reaction is tert-butyl hydroperoxide + 2 glutathione = tert-butanol + glutathione disulfide + H2O. Protects cells and enzymes from oxidative damage, by catalyzing the reduction of hydrogen peroxide, lipid peroxides and organic hydroperoxide, by glutathione. This Rattus norvegicus (Rat) protein is Glutathione peroxidase 3.